Consider the following 111-residue polypeptide: PHD finger-like domain-containing protein 5A (111 aa).

This sequence belongs to the PHF5 family.

This Drosophila melanogaster (Fruit fly) protein is PHD finger-like domain-containing protein 5A.